Consider the following 152-residue polypeptide: UPF0266 membrane protein YobD (152 aa).

The next 3 membrane-spanning stretches (helical) occupy residues 6-26, 45-65, and 67-87; these read LVLI…QFIM, VDSV…VTSH, and AQMT…IFWI.

This sequence belongs to the UPF0266 family.

The protein localises to the cell inner membrane. The chain is UPF0266 membrane protein YobD from Salmonella dublin (strain CT_02021853).